The following is a 1115-amino-acid chain: Iron-regulated protein FrpA (1115 aa).

Hemolysin-type calcium-binding repeat units follow at residues 755 to 772 (FGHN…NDTL), 773 to 790 (IGGA…SDTY), 901 to 918 (NGGL…NDLL), 919 to 936 (NGDA…NDTL), 937 to 954 (DGGE…NDAL), 955 to 972 (NGGE…NDTL), and 973 to 990 (IGGA…SDTY).

This sequence belongs to the RTX prokaryotic toxin (TC 1.C.11) family.

Its subcellular location is the cell outer membrane. It localises to the secreted. May participate in the pathogenesis of meningococcal disease. This is Iron-regulated protein FrpA (frpA) from Neisseria meningitidis serogroup C.